The following is a 200-amino-acid chain: Holliday junction branch migration complex subunit RuvA (200 aa).

The tract at residues 1–63 (MYAYVKGKLT…EDAQLLYGFS (63 aa)) is domain I. Residues 64-142 (SEEEKDMFLS…ITEEDSDSLL (79 aa)) form a domain II region. Residues 143-149 (QVDATST) form a flexible linker region. Residues 150 to 200 (VQDQFVQEAMLALEALGYSKRELAKVEKTLNKNKYDSVDEAVKAGLQLVVS) form a domain III region.

Belongs to the RuvA family. In terms of assembly, homotetramer. Forms an RuvA(8)-RuvB(12)-Holliday junction (HJ) complex. HJ DNA is sandwiched between 2 RuvA tetramers; dsDNA enters through RuvA and exits via RuvB. An RuvB hexamer assembles on each DNA strand where it exits the tetramer. Each RuvB hexamer is contacted by two RuvA subunits (via domain III) on 2 adjacent RuvB subunits; this complex drives branch migration. In the full resolvosome a probable DNA-RuvA(4)-RuvB(12)-RuvC(2) complex forms which resolves the HJ.

Its subcellular location is the cytoplasm. The RuvA-RuvB-RuvC complex processes Holliday junction (HJ) DNA during genetic recombination and DNA repair, while the RuvA-RuvB complex plays an important role in the rescue of blocked DNA replication forks via replication fork reversal (RFR). RuvA specifically binds to HJ cruciform DNA, conferring on it an open structure. The RuvB hexamer acts as an ATP-dependent pump, pulling dsDNA into and through the RuvAB complex. HJ branch migration allows RuvC to scan DNA until it finds its consensus sequence, where it cleaves and resolves the cruciform DNA. This Staphylococcus aureus (strain USA300) protein is Holliday junction branch migration complex subunit RuvA.